The following is a 289-amino-acid chain: Acetyl-coenzyme A carboxylase carboxyl transferase subunit beta (289 aa).

Positions 28–289 constitute a CoA carboxyltransferase N-terminal domain; sequence VMTKCPKCKK…QGGEMAVWQS (262 aa). Zn(2+) contacts are provided by Cys-32, Cys-35, Cys-51, and Cys-54. The C4-type zinc finger occupies 32–54; that stretch reads CPKCKKIMYTKEVLKNLKVCVNC.

This sequence belongs to the AccD/PCCB family. As to quaternary structure, acetyl-CoA carboxylase is a heterohexamer composed of biotin carboxyl carrier protein (AccB), biotin carboxylase (AccC) and two subunits each of ACCase subunit alpha (AccA) and ACCase subunit beta (AccD). The cofactor is Zn(2+).

It is found in the cytoplasm. The catalysed reaction is N(6)-carboxybiotinyl-L-lysyl-[protein] + acetyl-CoA = N(6)-biotinyl-L-lysyl-[protein] + malonyl-CoA. Its pathway is lipid metabolism; malonyl-CoA biosynthesis; malonyl-CoA from acetyl-CoA: step 1/1. In terms of biological role, component of the acetyl coenzyme A carboxylase (ACC) complex. Biotin carboxylase (BC) catalyzes the carboxylation of biotin on its carrier protein (BCCP) and then the CO(2) group is transferred by the transcarboxylase to acetyl-CoA to form malonyl-CoA. This chain is Acetyl-coenzyme A carboxylase carboxyl transferase subunit beta, found in Bacillus thuringiensis (strain Al Hakam).